We begin with the raw amino-acid sequence, 434 residues long: ATP-dependent protease ATPase subunit HslU (434 aa).

ATP is bound by residues isoleucine 18, 60–65 (GVGKTE), aspartate 247, glutamate 312, and arginine 384.

It belongs to the ClpX chaperone family. HslU subfamily. In terms of assembly, a double ring-shaped homohexamer of HslV is capped on each side by a ring-shaped HslU homohexamer. The assembly of the HslU/HslV complex is dependent on binding of ATP.

Its subcellular location is the cytoplasm. Its function is as follows. ATPase subunit of a proteasome-like degradation complex; this subunit has chaperone activity. The binding of ATP and its subsequent hydrolysis by HslU are essential for unfolding of protein substrates subsequently hydrolyzed by HslV. HslU recognizes the N-terminal part of its protein substrates and unfolds these before they are guided to HslV for hydrolysis. This chain is ATP-dependent protease ATPase subunit HslU, found in Brucella melitensis biotype 1 (strain ATCC 23456 / CCUG 17765 / NCTC 10094 / 16M).